Here is a 49-residue protein sequence, read N- to C-terminus: Large ribosomal subunit protein bL33B (49 aa).

It belongs to the bacterial ribosomal protein bL33 family.

The polypeptide is Large ribosomal subunit protein bL33B (Shouchella clausii (strain KSM-K16) (Alkalihalobacillus clausii)).